A 418-amino-acid polypeptide reads, in one-letter code: Phosphopentomutase (418 aa).

Mn(2+) is bound by residues aspartate 10, aspartate 297, histidine 302, aspartate 338, histidine 339, and histidine 350.

This sequence belongs to the phosphopentomutase family. It depends on Mn(2+) as a cofactor.

The protein resides in the cytoplasm. It catalyses the reaction 2-deoxy-alpha-D-ribose 1-phosphate = 2-deoxy-D-ribose 5-phosphate. The enzyme catalyses alpha-D-ribose 1-phosphate = D-ribose 5-phosphate. Its pathway is carbohydrate degradation; 2-deoxy-D-ribose 1-phosphate degradation; D-glyceraldehyde 3-phosphate and acetaldehyde from 2-deoxy-alpha-D-ribose 1-phosphate: step 1/2. Functionally, isomerase that catalyzes the conversion of deoxy-ribose 1-phosphate (dRib-1-P) and ribose 1-phosphate (Rib-1-P) to deoxy-ribose 5-phosphate (dRib-5-P) and ribose 5-phosphate (Rib-5-P), respectively. The sequence is that of Phosphopentomutase from Chromohalobacter salexigens (strain ATCC BAA-138 / DSM 3043 / CIP 106854 / NCIMB 13768 / 1H11).